Reading from the N-terminus, the 100-residue chain is MSFVTTRPDSIGETAANLHEIGVTMSAHDDGVTPLITNVESPAHDLVSIVTSMLFSMHGELYKAIARQAHVIHESFVQTLQTSKTSYWLTELANRAGTST.

The PE domain maps to 4 to 94; that stretch reads VTTRPDSIGE…TSYWLTELAN (91 aa).

The protein belongs to the mycobacterial PE family.

The protein resides in the secreted. It is found in the cell wall. The enzyme catalyses an acetyl ester + H2O = an aliphatic alcohol + acetate + H(+). It catalyses the reaction a butanoate ester + H2O = an aliphatic alcohol + butanoate + H(+). The catalysed reaction is an octanoate ester + H2O = an aliphatic alcohol + octanoate + H(+). Involved in cell wall lipids remodeling and in virulence. Restricts the biofilm growth and is essential for the optimal intracellular survival of M.tuberculosis. Shows esterase activity with a preference for short-chain esters, particularly pNP-acetate (C2) and pNP-butyrate (C4). Has weaker activity with pNP-octanoate (C8), pNP-laurate (C12) and pNP-myristate (C14). Shows weak long-chain triacylglycerol (TAG) hydrolase activity in vitro. Not necessary for PPE17 stability or for its localization on the mycobacterial surface. This Mycobacterium tuberculosis (strain ATCC 25618 / H37Rv) protein is Esterase PE11.